Consider the following 338-residue polypeptide: Alcohol dehydrogenase (338 aa).

Zn(2+)-binding residues include Cys38, His61, Glu62, Cys92, Cys95, Cys98, Cys106, and Cys148.

It belongs to the zinc-containing alcohol dehydrogenase family. As to quaternary structure, homotetramer. It depends on Zn(2+) as a cofactor.

The enzyme catalyses a primary alcohol + NAD(+) = an aldehyde + NADH + H(+). It catalyses the reaction a secondary alcohol + NAD(+) = a ketone + NADH + H(+). It carries out the reaction ethanol + NAD(+) = acetaldehyde + NADH + H(+). The catalysed reaction is 1-propanol + NAD(+) = propanal + NADH + H(+). The enzyme catalyses butan-1-ol + NAD(+) = butanal + NADH + H(+). It catalyses the reaction propan-2-ol + NAD(+) = acetone + NADH + H(+). Its function is as follows. Psychrophilic alcohol dehydrogenase that exhibits a wide range of substrate specificity, oxidizing mainly primary and secondary aliphatic alcohols, utilizing NAD(+) as a cosubstrate. In vitro, shows highest reaction rates for ethanol as a substrate and gradually decreases its reaction rates as the length and branching of the carbon chain of the alcohol substrates increase. To a lesser extent, is also able to reduce aldehydes and ketones. Do not catalyze the further oxidation of aldehydes to carboxylic acids. Cannot use NADP(+) instead of NAD(+). This is Alcohol dehydrogenase from Moraxella sp. (strain TAE123).